The primary structure comprises 325 residues: Eukaryotic translation initiation factor 3 subunit I (325 aa).

WD repeat units lie at residues 8 to 47, 50 to 91, 144 to 183, and 186 to 225; these read GHER…RLGT, GHTG…ALLK, CNDS…VLVN, and EHSR…HQKT. At Lys-264 the chain carries N6-acetyllysine. Lys-282 participates in a covalent cross-link: Glycyl lysine isopeptide (Lys-Gly) (interchain with G-Cter in ubiquitin). The WD 5 repeat unit spans residues 283 to 324; sequence GHFGPINSVAFHPDGKSYSSGGEDGYVRIHYFDPQYFEFEFE. Phosphotyrosine is present on Tyr-308.

The protein belongs to the eIF-3 subunit I family. In terms of assembly, component of the eukaryotic translation initiation factor 3 (eIF-3) complex, which is composed of 13 subunits: EIF3A, EIF3B, EIF3C, EIF3D, EIF3E, EIF3F, EIF3G, EIF3H, EIF3I, EIF3J, EIF3K, EIF3L and EIF3M. The eIF-3 complex appears to include 3 stable modules: module A is composed of EIF3A, EIF3B, EIF3G and EIF3I; module B is composed of EIF3F, EIF3H, and EIF3M; and module C is composed of EIF3C, EIF3D, EIF3E, EIF3K and EIF3L. EIF3C of module C binds EIF3B of module A and EIF3H of module B, thereby linking the three modules. EIF3J is a labile subunit that binds to the eIF-3 complex via EIF3B. The eIF-3 complex interacts with RPS6KB1 under conditions of nutrient depletion. Mitogenic stimulation leads to binding and activation of a complex composed of MTOR and RPTOR, leading to phosphorylation and release of RPS6KB1 and binding of EIF4B to eIF-3. Phosphorylated by TGF-beta type II receptor.

The protein resides in the cytoplasm. Its function is as follows. Component of the eukaryotic translation initiation factor 3 (eIF-3) complex, which is required for several steps in the initiation of protein synthesis. The eIF-3 complex associates with the 40S ribosome and facilitates the recruitment of eIF-1, eIF-1A, eIF-2:GTP:methionyl-tRNAi and eIF-5 to form the 43S pre-initiation complex (43S PIC). The eIF-3 complex stimulates mRNA recruitment to the 43S PIC and scanning of the mRNA for AUG recognition. The eIF-3 complex is also required for disassembly and recycling of post-termination ribosomal complexes and subsequently prevents premature joining of the 40S and 60S ribosomal subunits prior to initiation. The eIF-3 complex specifically targets and initiates translation of a subset of mRNAs involved in cell proliferation, including cell cycling, differentiation and apoptosis, and uses different modes of RNA stem-loop binding to exert either translational activation or repression. The polypeptide is Eukaryotic translation initiation factor 3 subunit I (Eif3i) (Rattus norvegicus (Rat)).